Reading from the N-terminus, the 227-residue chain is Adapter protein MecA 1 (227 aa).

The protein belongs to the MecA family. As to quaternary structure, homodimer.

Its function is as follows. Enables the recognition and targeting of unfolded and aggregated proteins to the ClpC protease or to other proteins involved in proteolysis. Acts negatively in the development of competence by binding ComK and recruiting it to the ClpCP protease. When overexpressed, inhibits sporulation. Also involved in Spx degradation by ClpC. The protein is Adapter protein MecA 1 (mecA1) of Bacillus anthracis.